We begin with the raw amino-acid sequence, 440 residues long: Tetratricopeptide repeat protein 5 (440 aa).

TPR repeat units lie at residues 7-61 (EEVK…EEVV), 68-98 (AQVL…AVKL), 103-130 (VEAW…SGAL), 136-174 (KVSL…AVQM), and 179-216 (GRSW…AEKV). Residues 13-24 (LQKLQELVDQLY) carry the Nuclear export signal motif. Residue S203 is modified to Phosphoserine; by ATM. At S221 the chain carries Phosphoserine; by CHEK2. Residues 224-253 (PDLHLNRATLHKYEESYGEALEGFSRAAAL) form a TPR 6 repeat. The interval 285-287 (KTK) is mediates interaction with 28S rRNA of ribosome-coding tubulin.

Interacts with JMY and p300/EP300; the interaction occurs in the nucleus and augments the association between JMY and p300/EP300 in response to DNA damage. Forms a complex with HSF1 and p300/EP300; these interactions augment chromatin-bound HSF1 and p300/EP300 histone acetyltransferase activity, resulting in enhanced heat-shock-responsive transcription. Interacts with PRMT5; the interaction is DNA damage-dependent and promotes PRMT5 interaction with p53/TP53 and subsequent methylation. Interacts with JMY; the interaction occurs in the cytoplasm and results in the inhibition of JYM's nucleation activity. Interacts with ribosome-coding tubulin (via 60S subunit 28S rRNA and protein uL24/RPL26) and the N-terminal of nascent tubulin polypeptide (via alpha-tubulin MREC motif and beta-tubulin MREI motif); these interactions result in tubulin mRNA-targeted degradation. Interacts with ATP5F1B; the interaction occurs in the mitochondria and results in ATP production decrease. Interacts with p53/TP53; the interaction occurs in the mitochondria and results in increased apoptosis. Phosphorylation by ATM kinase induces nuclear accumulation while interfering with nuclear export, and phosphorylation by CHEK2 kinase enhances nuclear stability.

Its subcellular location is the nucleus. It localises to the cytoplasm. It is found in the cytoplasmic vesicle. The protein localises to the mitochondrion matrix. In terms of biological role, cofactor involved in the regulation of various cellular mechanisms such as actin regulation, autophagy, chromatin regulation and DNA repair. In non-stress conditions, interacts with cofactor JMY in the cytoplasm which prevents JMY's actin nucleation activity and ability to activate the Arp2/3 complex. Acts as a negative regulator of nutrient stress-induced autophagy by preventing JMY's interaction with MAP1LC3B, thereby preventing autophagosome formation. Involves in tubulin autoregulation by promoting its degradation in response to excess soluble tubulin. To do so, associates with the active ribosome near the ribosome exit tunnel and with nascent tubulin polypeptides early during their translation, triggering tubulin mRNA-targeted degradation. Following DNA damage, phosphorylated by DNA damage responsive protein kinases ATM and CHEK2, leading to its nuclear accumulation and stability. Nuclear TTC5/STRAP promotes the assembly of a stress-responsive p53/TP53 coactivator complex, which includes the coactivators JMY and p300, thereby increasing p53/TP53-dependent transcription and apoptosis. Also recruits arginine methyltransferase PRMT5 to p53/TP53 when DNA is damaged, allowing PRMT5 to methylate p53/TP53. In DNA stress conditions, also prevents p53/TP53 degradation by E3 ubiquitin ligase MDM2. Upon heat-shock stress, forms a chromatin-associated complex with heat-shock factor 1 HSF1 and p300/EP300 to stimulate heat-shock-responsive transcription, thereby increasing cell survival. Mitochondrial TTC5/STRAP interacts with ATP synthase subunit beta ATP5F1B which decreased ATP synthase activity and lowers mitochondrial ATP production, thereby regulating cellular respiration and mitochondrial-dependent apoptosis. Mitochondrial TTC5/STRAP also regulates p53/TP53-mediated apoptosis. The polypeptide is Tetratricopeptide repeat protein 5 (Homo sapiens (Human)).